The sequence spans 434 residues: Calcium uptake protein 2, mitochondrial (434 aa).

A mitochondrion-targeting transit peptide spans 1-22 (MAAAAGSCARVAAWGGKLRRGL). Residues 172 to 207 (KPHSGFHVAFKMLDTDGNEMIEKREFFKLQKIISKQ) enclose the EF-hand 1 domain. Ca(2+)-binding residues include Asp185, Asp187, Asn189, Met191, Glu193, and Glu196. Position 205 is a phosphoserine (Ser205). The 36-residue stretch at 227–262 (EPEINTTLQMRFFGKRGQRKLHYKEFRRFMENLQTE) folds into the EF-hand 2; degenerate domain. One can recognise an EF-hand 3; degenerate domain in the interval 293–328 (TENKDIYWKNVREKLSAGESISLDEFKSFCHFTTHL). Residues 362–397 (LSNNILDTVFKIFDLDGDECLSHEEFLGVLKNRMHR) enclose the EF-hand 4 domain. Ca(2+)-binding residues include Asp375, Asp377, Asp379, Cys381, and Glu386.

Belongs to the MICU1 family. MICU2 subfamily. Heterodimer; disulfide-linked; heterodimerizes with MICU1. Component of the uniplex complex, composed of MCU, EMRE/SMDT1, MICU1 and MICU2 in a 4:4:1:1 stoichiometry.

Its subcellular location is the mitochondrion intermembrane space. The protein localises to the mitochondrion inner membrane. Calcium sensor of the mitochondrial calcium uniporter (MCU) channel, which senses calcium level via its EF-hand domains. MICU1 and MICU2 form a disulfide-linked heterodimer that stimulates and inhibits MCU activity, depending on the concentration of calcium. At low calcium levels, MICU1 occludes the pore of the MCU channel, preventing mitochondrial calcium uptake. At higher calcium levels, calcium-binding to MICU1 and MICU2 induces a conformational change that weakens MCU-MICU1 interactions and moves the MICU1-MICU2 heterodimer away from the pore, allowing calcium permeation through the MCU channel. The polypeptide is Calcium uptake protein 2, mitochondrial (Homo sapiens (Human)).